Here is a 358-residue protein sequence, read N- to C-terminus: UPF0575 protein C19orf67 (358 aa).

Residues 1 to 84 (MATEQWFEGS…PGPAPPRLSL (84 aa)) are disordered. Pro residues-rich tracts occupy residues 17–32 (ETPPPDALEPGTPPCG) and 70–80 (PLVPRPGPAPP).

Belongs to the UPF0575 family.

This Homo sapiens (Human) protein is UPF0575 protein C19orf67 (C19orf67).